A 384-amino-acid chain; its full sequence is Spermidine/putrescine import ATP-binding protein PotA (384 aa).

Positions 6–238 (ITFNNVSKTF…PINHFVANFI (233 aa)) constitute an ABC transporter domain. 40–47 (GASGSGKS) provides a ligand contact to ATP.

The protein belongs to the ABC transporter superfamily. Spermidine/putrescine importer (TC 3.A.1.11.1) family. As to quaternary structure, the complex is composed of two ATP-binding proteins (PotA), two transmembrane proteins (PotB and PotC) and a solute-binding protein (PotD).

Its subcellular location is the cell membrane. It catalyses the reaction ATP + H2O + polyamine-[polyamine-binding protein]Side 1 = ADP + phosphate + polyamineSide 2 + [polyamine-binding protein]Side 1.. In terms of biological role, part of the ABC transporter complex PotABCD involved in spermidine/putrescine import. Responsible for energy coupling to the transport system. In Streptococcus pyogenes serotype M28 (strain MGAS6180), this protein is Spermidine/putrescine import ATP-binding protein PotA.